Consider the following 165-residue polypeptide: Fimbrial protein (165 aa).

The N-terminal stretch at 1–21 (MRKSASAVAVLALIACGSAHA) is a signal peptide.

It is found in the fimbrium. Structural subunit of the sef14 fimbriae. The sequence is that of Fimbrial protein (sefA) from Salmonella enteritidis.